Reading from the N-terminus, the 372-residue chain is Pepsin A (372 aa).

Positions 1 to 42 (MSVVKIPLVKKKSLRQNLIENGKLKEFMRTHKYNLGSKYIRE) are cleaved as a propeptide — activation peptide. Residues 60–369 (YFGTIGIGTP…DRGNNQIGLA (310 aa)) enclose the Peptidase A1 domain. Asp-78 is an active-site residue. Cys-91 and Cys-96 are oxidised to a cystine. Ser-114 is subject to Phosphoserine. Cys-252 and Cys-256 form a disulfide bridge. Asp-261 is an active-site residue. A disulfide bridge connects residues Cys-295 and Cys-328.

It belongs to the peptidase A1 family.

The protein localises to the secreted. The enzyme catalyses Preferential cleavage: hydrophobic, preferably aromatic, residues in P1 and P1' positions. Cleaves 1-Phe-|-Val-2, 4-Gln-|-His-5, 13-Glu-|-Ala-14, 14-Ala-|-Leu-15, 15-Leu-|-Tyr-16, 16-Tyr-|-Leu-17, 23-Gly-|-Phe-24, 24-Phe-|-Phe-25 and 25-Phe-|-Tyr-26 bonds in the B chain of insulin.. In terms of biological role, shows particularly broad specificity; although bonds involving phenylalanine and leucine are preferred, many others are also cleaved to some extent. In Bos taurus (Bovine), this protein is Pepsin A (PGA).